An 825-amino-acid polypeptide reads, in one-letter code: Translation initiation factor IF-2 (825 aa).

4 stretches are compositionally biased toward basic and acidic residues: residues 1 to 19 (MTKK…DNKK), 35 to 45 (RKGEKKTEGKR), 70 to 98 (LLKD…EYKK), and 113 to 122 (KKVESVEKPA). Residues 1–239 (MTKKQENETS…TQRKDRPLPE (239 aa)) are disordered. Positions 158-169 (PSSSRRPSSRPS) are enriched in low complexity. Residues 181–191 (GRRRKSGKPGR) are compositionally biased toward basic residues. Positions 194–208 (QNSYADQGRGANSNR) are enriched in polar residues. A compositionally biased stretch (basic residues) spans 211-220 (QRKRKNKKHQ). The 170-residue stretch at 326 to 495 (VRPPVVTIMG…ILEADMLELK (170 aa)) folds into the tr-type G domain. The interval 335–342 (GHVDHGKT) is G1. 335 to 342 (GHVDHGKT) is a GTP binding site. The tract at residues 360-364 (GITQN) is G2. Positions 381-384 (DTPG) are G3. GTP is bound by residues 381 to 385 (DTPGH) and 435 to 438 (NKMD). Residues 435–438 (NKMD) form a G4 region. The segment at 471–473 (SAK) is G5.

Belongs to the TRAFAC class translation factor GTPase superfamily. Classic translation factor GTPase family. IF-2 subfamily.

It localises to the cytoplasm. Functionally, one of the essential components for the initiation of protein synthesis. Protects formylmethionyl-tRNA from spontaneous hydrolysis and promotes its binding to the 30S ribosomal subunits. Also involved in the hydrolysis of GTP during the formation of the 70S ribosomal complex. The sequence is that of Translation initiation factor IF-2 from Lactobacillus delbrueckii subsp. bulgaricus (strain ATCC BAA-365 / Lb-18).